A 437-amino-acid polypeptide reads, in one-letter code: Trigger factor (437 aa).

Positions 174-260 (GDFVQISFEG…VKSLKKKIFP (87 aa)) constitute a PPIase FKBP-type domain.

This sequence belongs to the FKBP-type PPIase family. Tig subfamily.

The protein resides in the cytoplasm. It catalyses the reaction [protein]-peptidylproline (omega=180) = [protein]-peptidylproline (omega=0). In terms of biological role, involved in protein export. Acts as a chaperone by maintaining the newly synthesized protein in an open conformation. Functions as a peptidyl-prolyl cis-trans isomerase. The polypeptide is Trigger factor (Koribacter versatilis (strain Ellin345)).